The chain runs to 160 residues: Small ribosomal subunit protein uS7 (160 aa).

The protein belongs to the universal ribosomal protein uS7 family. As to quaternary structure, part of the 30S ribosomal subunit. Contacts proteins S9 and S11.

Functionally, one of the primary rRNA binding proteins, it binds directly to 16S rRNA where it nucleates assembly of the head domain of the 30S subunit. Is located at the subunit interface close to the decoding center, probably blocks exit of the E-site tRNA. The polypeptide is Small ribosomal subunit protein uS7 (Hydrogenobaculum sp. (strain Y04AAS1)).